The chain runs to 170 residues: Phosphopantetheine adenylyltransferase (170 aa).

Threonine 10 is a substrate binding site. ATP-binding positions include 10–11 (TF) and histidine 18. Substrate-binding residues include lysine 42, valine 79, and arginine 93. Residues 94–96 (GLR), glutamate 104, and 129–135 (TQFISST) contribute to the ATP site.

This sequence belongs to the bacterial CoaD family. Homohexamer. The cofactor is Mg(2+).

The protein resides in the cytoplasm. It catalyses the reaction (R)-4'-phosphopantetheine + ATP + H(+) = 3'-dephospho-CoA + diphosphate. It participates in cofactor biosynthesis; coenzyme A biosynthesis; CoA from (R)-pantothenate: step 4/5. Its function is as follows. Reversibly transfers an adenylyl group from ATP to 4'-phosphopantetheine, yielding dephospho-CoA (dPCoA) and pyrophosphate. This chain is Phosphopantetheine adenylyltransferase, found in Parvibaculum lavamentivorans (strain DS-1 / DSM 13023 / NCIMB 13966).